The chain runs to 376 residues: dTDP-4-amino-4,6-dideoxygalactose transaminase (376 aa).

At Lys-181 the chain carries N6-(pyridoxal phosphate)lysine.

It belongs to the DegT/DnrJ/EryC1 family. In terms of assembly, homotetramer. Requires pyridoxal 5'-phosphate as cofactor.

It carries out the reaction dTDP-4-amino-4,6-dideoxy-alpha-D-galactose + 2-oxoglutarate = dTDP-4-dehydro-6-deoxy-alpha-D-glucose + L-glutamate. It participates in bacterial outer membrane biogenesis; enterobacterial common antigen biosynthesis. Functionally, catalyzes the synthesis of dTDP-4-amino-4,6-dideoxy-D-galactose (dTDP-Fuc4N) from dTDP-4-keto-6-deoxy-D-glucose (dTDP-D-Glc4O) and L-glutamate. The polypeptide is dTDP-4-amino-4,6-dideoxygalactose transaminase (Escherichia coli (strain K12)).